The primary structure comprises 134 residues: Phosphomevalonate dehydratase small subunit (134 aa).

Serine 62 functions as the Proton acceptor in the catalytic mechanism.

It belongs to the AcnX type II small subunit family. In terms of assembly, heterodimer composed of a large subunit (PMDh-L) and a small subunit (PMDh-S).

It catalyses the reaction (R)-5-phosphomevalonate = (2E)-3-methyl-5-phosphooxypent-2-enoate + H2O. It functions in the pathway isoprenoid biosynthesis; isopentenyl diphosphate biosynthesis via mevalonate pathway. Its function is as follows. Component of a hydro-lyase that catalyzes the dehydration of mevalonate 5-phosphate (MVA5P) to form trans-anhydromevalonate 5-phosphate (tAHMP). Involved in the archaeal mevalonate (MVA) pathway, which provides fundamental precursors for isoprenoid biosynthesis, such as isopentenyl diphosphate (IPP) and dimethylallyl diphosphate (DMAPP). This Pyrococcus horikoshii (strain ATCC 700860 / DSM 12428 / JCM 9974 / NBRC 100139 / OT-3) protein is Phosphomevalonate dehydratase small subunit.